The following is a 914-amino-acid chain: Serine/threonine-protein kinase MST20 (914 aa).

The span at Met-1–Asp-12 shows a compositional bias: polar residues. Disordered regions lie at residues Met-1–Asn-140, Asn-156–Asn-184, and Ala-251–Lys-286. 3 stretches are compositionally biased toward low complexity: residues Thr-13–Ser-26, Arg-63–Pro-72, and Thr-79–Ser-97. Positions Ala-122–His-136 are enriched in basic and acidic residues. Residues Asn-156 to Ser-166 show a composition bias toward basic residues. Residues Pro-175–Asn-184 are compositionally biased toward polar residues. Residues Arg-271–Lys-280 show a composition bias toward basic and acidic residues. The CRIB domain occupies Ile-306–Gly-319. Residues Ser-408–Leu-615 are disordered. 2 stretches are compositionally biased toward low complexity: residues Ala-516 to Ala-548 and Gln-562 to Gln-576. Over residues Tyr-577–Ala-586 the composition is skewed to polar residues. The span at Gln-587–Gln-596 shows a compositional bias: low complexity. Residues Tyr-634–Met-885 enclose the Protein kinase domain. ATP is bound by residues Ile-640–Val-648 and Lys-663. The active-site Proton acceptor is the Asp-753.

This sequence belongs to the protein kinase superfamily. STE Ser/Thr protein kinase family. STE20 subfamily.

It is found in the cytoplasm. It localises to the nucleus. It carries out the reaction L-seryl-[protein] + ATP = O-phospho-L-seryl-[protein] + ADP + H(+). The catalysed reaction is L-threonyl-[protein] + ATP = O-phospho-L-threonyl-[protein] + ADP + H(+). Functionally, MAP4K component of the MAPK pathway required for the mating pheromone response and the regulation of cell polarity and cell cycle. Phosphorylates histone H2B to form H2BS10ph. Is involved in conidiation, aerial hyphal growth and infection-related morphogenesis. This chain is Serine/threonine-protein kinase MST20 (MST20), found in Pyricularia oryzae (strain 70-15 / ATCC MYA-4617 / FGSC 8958) (Rice blast fungus).